The following is a 113-amino-acid chain: Large ribosomal subunit protein bL19 (113 aa).

The protein belongs to the bacterial ribosomal protein bL19 family.

In terms of biological role, this protein is located at the 30S-50S ribosomal subunit interface and may play a role in the structure and function of the aminoacyl-tRNA binding site. This is Large ribosomal subunit protein bL19 from Corynebacterium efficiens (strain DSM 44549 / YS-314 / AJ 12310 / JCM 11189 / NBRC 100395).